We begin with the raw amino-acid sequence, 208 residues long: Ras-related protein Rab-6B (208 aa).

GTP contacts are provided by residues 20–27 (GEQSVGKT), Thr45, 68–72 (DTAGQ), and 126–129 (NKTD). Residues 42–50 (YQATIGIDF) carry the Effector region motif. S-geranylgeranyl cysteine attachment occurs at residues Cys206 and Cys208. At Cys208 the chain carries Cysteine methyl ester.

This sequence belongs to the small GTPase superfamily. Rab family. Interacts (GTP-bound) with BICD1 (via C-terminus); the interaction is direct. Interacts (GDP-bound) with DYNLRB1. Interacts (GTP-bound) with APBA1/MINT1. Interacts (GTP-bound) with VPS13B.

Its subcellular location is the golgi apparatus membrane. It is found in the endoplasmic reticulum-Golgi intermediate compartment. The protein localises to the cytoplasmic vesicle. The enzyme catalyses GTP + H2O = GDP + phosphate + H(+). Its activity is regulated as follows. Regulated by guanine nucleotide exchange factors (GEFs) which promote the exchange of bound GDP for free GTP, GTPase activating proteins (GAPs) which increase the GTP hydrolysis activity, and GDP dissociation inhibitors which inhibit the dissociation of the nucleotide from the GTPase. The small GTPases Rab are key regulators of intracellular membrane trafficking, from the formation of transport vesicles to their fusion with membranes. Rabs cycle between active GTP-bound and inactive GDP-bound states. In their active state, drive transport of vesicular carriers from donor organelles to acceptor organelles to regulate the membrane traffic that maintains organelle identity and morphology. Recruits VPS13B to the Golgi membrane. Regulates the compacted morphology of the Golgi. Seems to have a role in retrograde membrane traffic at the level of the Golgi complex. May function in retrograde transport in neuronal cells. Plays a role in neuron projection development. In Bos taurus (Bovine), this protein is Ras-related protein Rab-6B (RAB6B).